We begin with the raw amino-acid sequence, 618 residues long: Probable N-acetylgalactosaminyltransferase 6 (618 aa).

Residues 1–16 (MIASLIRSRRRSRRCV) are Cytoplasmic-facing. Residues 17-39 (VYSVFLFGFLALWGSFALALVFL) traverse the membrane as a helical; Signal-anchor for type II membrane protein segment. Topologically, residues 40–618 (SDMYIGEDQI…TEMSWLPEHP (579 aa)) are lumenal. Residues Asn-81 and Asn-149 are each glycosylated (N-linked (GlcNAc...) asparagine). Disulfide bonds link Cys-147–Cys-381 and Cys-372–Cys-452. The segment at 156–267 (LPTTSVIIVY…KGWLEPLLTR (112 aa)) is catalytic subdomain A. Substrate contacts are provided by Asp-197 and Arg-228. Asp-251 serves as a coordination point for Mn(2+). Position 252 (Ser-252) interacts with substrate. His-253 provides a ligand contact to Mn(2+). The catalytic subdomain B stretch occupies residues 327-389 (PIESPTMAGG…PCSHVGHVFR (63 aa)). Trp-358 is a substrate binding site. His-386 is a Mn(2+) binding site. Arg-389 contacts substrate. One can recognise a Ricin B-type lectin domain in the interval 474-609 (RFGRMTSSSN…SNDRQNWTIT (136 aa)). N-linked (GlcNAc...) asparagine glycosylation occurs at Asn-483. 3 disulfide bridges follow: Cys-487–Cys-505, Cys-530–Cys-550, and Cys-575–Cys-597. Residue Asn-605 is glycosylated (N-linked (GlcNAc...) asparagine).

This sequence belongs to the glycosyltransferase 2 family. GalNAc-T subfamily. The cofactor is Mn(2+).

Its subcellular location is the golgi apparatus membrane. It functions in the pathway protein modification; protein glycosylation. Functionally, probable glycopeptide transferase involved in O-linked oligosaccharide biosynthesis. Glycopeptide transferases catalyze the transfer of an N-acetyl-D-galactosamine residue to an already glycosylated peptide. In contrast to other members of the family, it does not act as a peptide transferase that transfers GalNAc onto serine or threonine residue on peptides that have been tested. Some peptide transferase activity is however not excluded, considering that its appropriate peptide substrate may remain unidentified. In Caenorhabditis elegans, this protein is Probable N-acetylgalactosaminyltransferase 6 (gly-6).